Reading from the N-terminus, the 135-residue chain is Ribonuclease VapC26 (135 aa).

The 118-residue stretch at 1–118 (MIIDTSALLA…TRTILTLDRR (118 aa)) folds into the PINc domain. Mg(2+) is bound by residues Asp4 and Asp97.

It belongs to the PINc/VapC protein family. Mg(2+) serves as cofactor.

Its function is as follows. Toxic component of a type II toxin-antitoxin (TA) system. An RNase. Upon expression in M.smegmatis inhibits colony formation. Its toxic effect is neutralized by coexpression with cognate antitoxin VapB26. The chain is Ribonuclease VapC26 from Mycobacterium tuberculosis (strain ATCC 25618 / H37Rv).